Consider the following 344-residue polypeptide: Glycerol-3-phosphate dehydrogenase [NAD(P)+] (344 aa).

NADPH-binding residues include serine 11, tryptophan 12, histidine 32, arginine 33, and lysine 105. Residues lysine 105, glycine 135, and serine 137 each coordinate sn-glycerol 3-phosphate. Alanine 139 lines the NADPH pocket. Positions 190, 243, 253, 254, and 255 each coordinate sn-glycerol 3-phosphate. Catalysis depends on lysine 190, which acts as the Proton acceptor. Position 254 (arginine 254) interacts with NADPH. NADPH is bound by residues valine 278 and glutamate 280.

The protein belongs to the NAD-dependent glycerol-3-phosphate dehydrogenase family.

It localises to the cytoplasm. It catalyses the reaction sn-glycerol 3-phosphate + NAD(+) = dihydroxyacetone phosphate + NADH + H(+). The catalysed reaction is sn-glycerol 3-phosphate + NADP(+) = dihydroxyacetone phosphate + NADPH + H(+). The protein operates within membrane lipid metabolism; glycerophospholipid metabolism. Its function is as follows. Catalyzes the reduction of the glycolytic intermediate dihydroxyacetone phosphate (DHAP) to sn-glycerol 3-phosphate (G3P), the key precursor for phospholipid synthesis. This Oceanobacillus iheyensis (strain DSM 14371 / CIP 107618 / JCM 11309 / KCTC 3954 / HTE831) protein is Glycerol-3-phosphate dehydrogenase [NAD(P)+].